A 299-amino-acid chain; its full sequence is Taste receptor type 2 member 50 (299 aa).

Position 1 (Met1) is a topological domain, extracellular. Residues 2-22 form a helical membrane-spanning segment; the sequence is VTFLHIFFSILILVLFVLGNF. The Cytoplasmic portion of the chain corresponds to 23-55; it reads ANGFIALVNFIDLVKRKKISSADQILTALAVSR. Residues 56-76 form a helical membrane-spanning segment; the sequence is IGLLWALLLNWYLTVLNPAFY. Residues 77–87 lie on the Extracellular side of the membrane; the sequence is SVELRITSYNA. A helical transmembrane segment spans residues 88 to 108; it reads WVVTNHFSMWLAASLSIFYLL. Over 109–126 the chain is Cytoplasmic; that stretch reads KIANFSNLIFLHLKRRVR. A helical membrane pass occupies residues 127–147; sequence SVILVILLGPLTFLVCHLFVA. Over 148–181 the chain is Extracellular; it reads NMDESMSAEEYEGNMTGKLKLRNTVHLSYLTVTT. Residue Asn161 is glycosylated (N-linked (GlcNAc...) asparagine). A helical transmembrane segment spans residues 182 to 202; sequence LWSFIPFTLSLISFLMLICSL. At 203 to 229 the chain is on the cytoplasmic side; sequence CKHVKKMQLHGEGSQDLSTKVHIKALQ. A helical membrane pass occupies residues 230–250; that stretch reads TLISFLLLCAIFFLFLIISIW. Topologically, residues 251–259 are extracellular; that stretch reads NPRRLQNDP. Residues 260–280 form a helical membrane-spanning segment; it reads VVVVSKAVGNIYLALDSFILI. Residues 281 to 299 are Cytoplasmic-facing; it reads WRTKKLKHTFLLILCQIRC.

This sequence belongs to the G-protein coupled receptor T2R family.

It localises to the membrane. Receptor that may play a role in the perception of bitterness and is gustducin-linked. May play a role in sensing the chemical composition of the gastrointestinal content. The activity of this receptor may stimulate alpha gustducin, mediate PLC-beta-2 activation and lead to the gating of TRPM5. This chain is Taste receptor type 2 member 50 (TAS2R50), found in Pongo pygmaeus (Bornean orangutan).